We begin with the raw amino-acid sequence, 372 residues long: 18-hydroxynorfluorocurarine reductase (372 aa).

Zn(2+)-binding residues include Cys-47, Asp-50, His-69, Glu-70, Cys-100, Cys-103, Cys-106, Cys-114, and Cys-172. NADP(+)-binding positions include 197 to 202, Lys-226, 283 to 285, Ser-307, and Arg-354; these read GLGGIG and LGA.

Belongs to the zinc-containing alcohol dehydrogenase family. As to quaternary structure, homodimer. The cofactor is Zn(2+).

The enzyme catalyses (19E)-cur-19-en-17-al + NADP(+) = norfluorocurarine + NADPH + H(+). The catalysed reaction is 17,18-epoxy-17-hydroxycur-19-ene + NADP(+) = 18-hydroxynorfluorocurarine + NADPH + H(+). The protein operates within alkaloid biosynthesis. Functionally, alcohol dehydrogenase involved in the biosynthesis of curare monoterpene indole alkaloids (MIAs), natural products such as diaboline, a pharmacologically active compound used to regulate blood pressure. Curare alkaloids act as animal glycine receptor antagonists. Catalyzes the conversion of norfluorocurarine to desoxy Wieland-Gumlich aldehyde, and of 18-OH norfluorocurarine to Wieland-Gumlich aldehyde. The chain is 18-hydroxynorfluorocurarine reductase from Strychnos sp.